An 814-amino-acid polypeptide reads, in one-letter code: Echinoderm microtubule-associated protein-like 1 (814 aa).

Positions 31–72 (SMEVSDRIASLEQRVQMQEDDIQLLKSALADVVRRLNITEEQ) form a coiled coil. The disordered stretch occupies residues 77-180 (NRKGPTKARP…ESKPKEPAFS (104 aa)). Polar residues predominate over residues 92 to 101 (PLRTTVNNGT). Positions 103-115 (LPKKPSASLPAPS) are enriched in low complexity. Positions 127-137 (KSINRTSSSER) are enriched in polar residues. The segment covering 142 to 152 (GRRESSGDSKG) has biased composition (basic and acidic residues). The span at 155–167 (NRTGSTSSSSSGK) shows a compositional bias: low complexity. Positions 175-814 (KEPAFSPEEG…DTSIMQWRVI (640 aa)) are tandem atypical propeller in EMLs. WD repeat units lie at residues 260–309 (EQLQ…IWDS), 314–357 (TLHV…VWDW), 362–399 (RLADVKCSNEAVFAADFHPTDTNIIVTCGKSHLYFWTL), 408–445 (QGLFEKQEKPKFVLCVTFSENGDTITGDSSGNILVWGK), 449–488 (RISYAVQGAHEGGIFALCMLRDGTLVSGGGKDRRLISWNG), 492–529 (KLHKAEIPEQFGPIRTVAEGKGNVILIGTTRNFVLQGT), 534–571 (FTPITQGHTDELWGLAIHASKPQFLTCGHDKHATLWDA), 577–612 (VWDKIIEDPAQSSGFHPSGSVVAVGTLTGRWFVFDT), 616–654 (DLVTVHTDGNEQLSVMRYSPDGNFLAIGSHDNCIYIYGV), 663–700 (RVGKCSGHSSFITHLDWSVNSQFLVSNSGDYEILYWVP), 708–767 (SVET…LFSY), and 774–813 (APSHIYSGHSSHVTNVDFLCEDSHLISTGGKDTSIMQWRV).

It belongs to the WD repeat EMAP family. Homotrimer; self-association is mediated by the N-terminal coiled coil. Does not interact with EML3. Binds unpolymerized tubulins via its WD repeat region. Binds repolymerizing microtubules. Interacts with TASOR. As to expression, detected in adult brain cortex, hippocampus and thalamus. Expressed in the stomach, lungs and in Sertoli cells of the testis.

It localises to the cytoplasm. The protein resides in the perinuclear region. The protein localises to the cytoskeleton. Functionally, modulates the assembly and organization of the microtubule cytoskeleton, and probably plays a role in regulating the orientation of the mitotic spindle and the orientation of the plane of cell division. Required for normal proliferation of neuronal progenitor cells in the developing brain and for normal brain development. Does not affect neuron migration per se. The chain is Echinoderm microtubule-associated protein-like 1 (Eml1) from Mus musculus (Mouse).